We begin with the raw amino-acid sequence, 72 residues long: Large ribosomal subunit protein bL28 (72 aa).

It belongs to the bacterial ribosomal protein bL28 family.

This is Large ribosomal subunit protein bL28 from Pelodictyon phaeoclathratiforme (strain DSM 5477 / BU-1).